A 445-amino-acid polypeptide reads, in one-letter code: Potassium/proton antiporter CemA (445 aa).

4 helical membrane-spanning segments follow: residues 44–64 (MQVS…VNIC), 330–350 (ALTC…ILIL), 368–388 (LIII…GWKL), and 405–425 (FILC…KYWI).

Belongs to the CemA family.

Its subcellular location is the plastid. The protein localises to the chloroplast inner membrane. It catalyses the reaction K(+)(in) + H(+)(out) = K(+)(out) + H(+)(in). Functionally, contributes to K(+)/H(+) antiport activity by supporting proton efflux to control proton extrusion and homeostasis in chloroplasts in a light-dependent manner to modulate photosynthesis. Prevents excessive induction of non-photochemical quenching (NPQ) under continuous-light conditions. Indirectly promotes efficient inorganic carbon uptake into chloroplasts. This is Potassium/proton antiporter CemA from Pleurastrum terricola (Filamentous green alga).